The primary structure comprises 332 residues: Cell division protein ZipA (332 aa).

Residues 1-6 are Periplasmic-facing; it reads MMQDLR. A helical transmembrane segment spans residues 7-27; it reads LILIVVGAIAIIALLLHGLWT. The Cytoplasmic portion of the chain corresponds to 28–332; sequence SRKERSSLFR…RIRDVLKANA (305 aa). Basic and acidic residues predominate over residues 40-51; that stretch reads PVKRAKKARDET. Residues 40-189 are disordered; the sequence is PVKRAKKARD…VQPAPQQPAE (150 aa). The segment covering 76–88 has biased composition (low complexity); the sequence is SFDSASVDSSSFD. A compositionally biased stretch (basic and acidic residues) spans 93-105; it reads AREDVRSEAKSPF.

The protein belongs to the ZipA family. As to quaternary structure, interacts with FtsZ via their C-terminal domains.

The protein resides in the cell inner membrane. Essential cell division protein that stabilizes the FtsZ protofilaments by cross-linking them and that serves as a cytoplasmic membrane anchor for the Z ring. Also required for the recruitment to the septal ring of downstream cell division proteins. The polypeptide is Cell division protein ZipA (Pectobacterium atrosepticum (strain SCRI 1043 / ATCC BAA-672) (Erwinia carotovora subsp. atroseptica)).